The following is a 588-amino-acid chain: MRTHFCGLVDETLIGQTVTLAGWTDVARNLGGVCFIDLRDHEGIVQVTVEPAEGDANSAEVFKVAASLGYEDVLQVEGVVRARHAVNDKIRTGKVEVIATRITILNKAAPLPFHAHENPGEDTRLKYRYLDLRRPEMQRMQRTRIKLVQALRRHLDARDFQDIETPILTKATPEGARDFLVPARMHPGEFYALPQSPQLFKQILMVAGFDRYYQIARCFRDEALRADRQLEFTQLDMEFAFVRERDVQDFVEDMIRAIFKEVVDVELAAQFPRMTWAEAMRRYGSDKPDLRIALELVDVAELVKTSEFPVFAAAANDADGRVAALRIPGGATLSRKQIDDYAAHAAKYGAKGLAYIKLSESGEVSSPIAKFFGEEAFAALLAHVGAANGDIVFFGAGSYNKVSDFMGALRLKAGKDFGLVAAGWAPLWVTDFPMFEWDEEAQRYVALHHPFTAPAVDDIADLRANARTAVSRGYDMVLNGNEIGGGSIRIHRPDMQSAVFELLGIGAEEARAKFGFLLDALNYGAPPHGGIAFGIDRIAALMAGTESIRDVIPFPKTTGAQDLMTDAPSPIAAEQLAEVHVQVRPKQA.

Residue Glu174 coordinates L-aspartate. Residues 198–201 form an aspartate region; sequence QLFK. An L-aspartate-binding site is contributed by Arg220. ATP-binding positions include 220–222 and Gln229; that span reads RDE. His448 is an L-aspartate binding site. Residue Glu482 participates in ATP binding. Arg489 contacts L-aspartate. An ATP-binding site is contributed by 534 to 537; the sequence is GIDR.

The protein belongs to the class-II aminoacyl-tRNA synthetase family. Type 1 subfamily. As to quaternary structure, homodimer.

The protein localises to the cytoplasm. The catalysed reaction is tRNA(Asp) + L-aspartate + ATP = L-aspartyl-tRNA(Asp) + AMP + diphosphate. Its function is as follows. Catalyzes the attachment of L-aspartate to tRNA(Asp) in a two-step reaction: L-aspartate is first activated by ATP to form Asp-AMP and then transferred to the acceptor end of tRNA(Asp). The polypeptide is Aspartate--tRNA ligase (Xanthomonas campestris pv. campestris (strain B100)).